Consider the following 290-residue polypeptide: NAD kinase (290 aa).

Asp73 acts as the Proton acceptor in catalysis. NAD(+) is bound by residues 73-74 (DG), 147-148 (ND), Arg158, Arg175, Asp177, 188-193 (TAYALS), and Gln246.

It belongs to the NAD kinase family. A divalent metal cation serves as cofactor.

It localises to the cytoplasm. It carries out the reaction NAD(+) + ATP = ADP + NADP(+) + H(+). In terms of biological role, involved in the regulation of the intracellular balance of NAD and NADP, and is a key enzyme in the biosynthesis of NADP. Catalyzes specifically the phosphorylation on 2'-hydroxyl of the adenosine moiety of NAD to yield NADP. The chain is NAD kinase from Thiobacillus denitrificans (strain ATCC 25259 / T1).